Reading from the N-terminus, the 378-residue chain is Lipid-A-disaccharide synthase (378 aa).

Belongs to the LpxB family.

It catalyses the reaction a lipid X + a UDP-2-N,3-O-bis[(3R)-3-hydroxyacyl]-alpha-D-glucosamine = a lipid A disaccharide + UDP + H(+). Its pathway is bacterial outer membrane biogenesis; LPS lipid A biosynthesis. In terms of biological role, condensation of UDP-2,3-diacylglucosamine and 2,3-diacylglucosamine-1-phosphate to form lipid A disaccharide, a precursor of lipid A, a phosphorylated glycolipid that anchors the lipopolysaccharide to the outer membrane of the cell. This chain is Lipid-A-disaccharide synthase, found in Pseudomonas aeruginosa (strain LESB58).